Consider the following 600-residue polypeptide: tRNA(Ile)-lysidine synthase, chloroplastic (600 aa).

35–40 contacts ATP; that stretch reads SGGQDS.

The protein belongs to the tRNA(Ile)-lysidine synthase family.

The protein localises to the plastid. The protein resides in the chloroplast. The catalysed reaction is cytidine(34) in tRNA(Ile2) + L-lysine + ATP = lysidine(34) in tRNA(Ile2) + AMP + diphosphate + H(+). Its function is as follows. Ligates lysine onto the cytidine present at position 34 of the AUA codon-specific tRNA(Ile) that contains the anticodon CAU, in an ATP-dependent manner. Cytidine is converted to lysidine, thus changing the amino acid specificity of the tRNA from methionine to isoleucine. In Tupiella akineta (Green alga), this protein is tRNA(Ile)-lysidine synthase, chloroplastic.